The sequence spans 419 residues: MKVLVLGAGVAGVSSVWYLAEAGHEVTVIDRTEGVAMETSFANAGQLSYGYTTPWAAPGIPTKALKRLFKSHPPLLFRPDGGLYQIEWLWRMLQNCTATRYQINKERMVRISEYSREMFRRFEAQTDMNFEGRKKGTLQIFRQTEEVEAAKQDIAVLERYGVPYRRLKPEECAEFEPALARVTAKIVGGLHLPADATGDCRLFTENLYKLCQEKGVRFYFNQTISRIDHNGLRIKAVETETGRFETDAVVCALGCFSRTVLAQLDLNLPIYPVKGYSLTLPVTNSDGAPVSTVLDESYKVAITRFDNRIRVGGMAELSGYETKLPEKRRETLALVVNDLFPEGGDLSQALSWSGLRPMTPDSTPLIGRTRFENLFLNTGHGTLGWTMSPGSAKLTADIVSGKDTEIRSDDLSLSRYQKL.

3–17 (VLVLGAGVAGVSSVW) contributes to the FAD binding site.

This sequence belongs to the DadA oxidoreductase family. FAD serves as cofactor.

It carries out the reaction a D-alpha-amino acid + A + H2O = a 2-oxocarboxylate + AH2 + NH4(+). The protein operates within amino-acid degradation; D-alanine degradation; NH(3) and pyruvate from D-alanine: step 1/1. In terms of biological role, oxidative deamination of D-amino acids. The polypeptide is D-amino acid dehydrogenase (Neisseria gonorrhoeae (strain ATCC 700825 / FA 1090)).